Consider the following 86-residue polypeptide: EMBRYO SURROUNDING FACTOR 1-like protein 2 (86 aa).

Positions 1-21 (MKSHIAIICIIMLSFFSMHEY) are cleaved as a signal peptide. Disulfide bonds link C39-C54, C44-C82, C52-C78, and C55-C65.

This sequence belongs to the MEG family.

The sequence is that of EMBRYO SURROUNDING FACTOR 1-like protein 2 (ESFL2) from Arabidopsis thaliana (Mouse-ear cress).